Here is a 756-residue protein sequence, read N- to C-terminus: Hormone-sensitive lipase (756 aa).

Positions 350–352 (HGG) match the Involved in the stabilization of the negatively charged intermediate by the formation of the oxyanion hole motif. The active site involves Ser424. Disordered regions lie at residues 542 to 570 (SVSKTEPMRRSVSEAALTQPEGSLGTDSL) and 581 to 600 (RNSSDTTDTPELSLSAETLG). A Phosphoserine; by PKA modification is found at Ser552. Ser554 carries the phosphoserine; by AMPK modification. The segment covering 581 to 596 (RNSSDTTDTPELSLSA) has biased composition (polar residues). A phosphoserine mark is found at Ser595 and Ser649. Catalysis depends on residues Asp692 and His722.

Belongs to the 'GDXG' lipolytic enzyme family. In terms of assembly, monomer and homodimer. Interacts with CAVIN1 in the adipocyte cytoplasm. Interacts with PLIN5. Phosphorylation by AMPK reduces its translocation towards the lipid droplets.

It localises to the cell membrane. The protein localises to the membrane. Its subcellular location is the caveola. The protein resides in the cytoplasm. It is found in the cytosol. It localises to the lipid droplet. It carries out the reaction a diacylglycerol + H2O = a monoacylglycerol + a fatty acid + H(+). The catalysed reaction is a triacylglycerol + H2O = a diacylglycerol + a fatty acid + H(+). The enzyme catalyses a monoacylglycerol + H2O = glycerol + a fatty acid + H(+). It catalyses the reaction Hydrolyzes glycerol monoesters of long-chain fatty acids.. It carries out the reaction 1,2-di-(9Z-octadecenoyl)-glycerol + (9Z)-octadecenoate + H(+) = 1,2,3-tri-(9Z-octadecenoyl)-glycerol + H2O. The catalysed reaction is 2,3-di-(9Z)-octadecenoyl-sn-glycerol + H2O = 2-(9Z-octadecenoyl)-glycerol + (9Z)-octadecenoate + H(+). The enzyme catalyses cholesteryl (9Z-octadecenoate) + H2O = cholesterol + (9Z)-octadecenoate + H(+). It catalyses the reaction 1,2,3-tri-(9Z-octadecenoyl)-glycerol + H2O = di-(9Z)-octadecenoylglycerol + (9Z)-octadecenoate + H(+). It carries out the reaction all-trans-retinyl hexadecanoate + H2O = all-trans-retinol + hexadecanoate + H(+). The catalysed reaction is 1,2-di-(9Z-octadecenoyl)-glycerol + H2O = (9Z-octadecenoyl)-glycerol + (9Z)-octadecenoate + H(+). The enzyme catalyses 2-(5Z,8Z,11Z,14Z-eicosatetraenoyl)-glycerol + H2O = glycerol + (5Z,8Z,11Z,14Z)-eicosatetraenoate + H(+). It catalyses the reaction 1-(9Z-octadecenoyl)-glycerol + H2O = glycerol + (9Z)-octadecenoate + H(+). It carries out the reaction 2-(9Z-octadecenoyl)-glycerol + H2O = glycerol + (9Z)-octadecenoate + H(+). The catalysed reaction is 1-O-hexadecyl-2-acetyl-sn-glycerol + H2O = 1-O-hexadecyl-sn-glycerol + acetate + H(+). The enzyme catalyses 1,2-di-(9Z-octadecenoyl)-sn-glycerol + H2O = (9Z-octadecenoyl)-glycerol + (9Z)-octadecenoate + H(+). It catalyses the reaction 1,3-di-(9Z-octadecenoyl)-glycerol + H2O = 1-(9Z-octadecenoyl)-glycerol + (9Z)-octadecenoate + H(+). It carries out the reaction 1,2-di-(9Z-octadecenoyl)-glycerol + H2O = 2-(9Z-octadecenoyl)-glycerol + (9Z)-octadecenoate + H(+). The protein operates within glycerolipid metabolism; triacylglycerol degradation. Its function is as follows. Lipase with broad substrate specificity, catalyzing the hydrolysis of triacylglycerols (TAGs), diacylglycerols (DAGs), monoacylglycerols (MAGs), cholesteryl esters and retinyl esters. Shows a preferential hydrolysis of DAGs over TAGs and MAGs. Preferentially hydrolyzes fatty acid (FA) esters at the sn-3 position of the glycerol backbone in DAGs and FA esters at the sn-1 and sn-2 positions of the glycerol backbone in TAGs. Catalyzes the hydrolysis of 2-arachidonoylglycerol, an endocannabinoid and of 2-acetyl monoalkylglycerol ether, the penultimate precursor of the pathway for de novo synthesis of platelet-activating factor. In adipose tissue and heart, it primarily hydrolyzes stored triglycerides to free fatty acids, while in steroidogenic tissues, it principally converts cholesteryl esters to free cholesterol for steroid hormone production. The chain is Hormone-sensitive lipase (LIPE) from Bos taurus (Bovine).